Reading from the N-terminus, the 315-residue chain is Acetyl-coenzyme A carboxylase carboxyl transferase subunit alpha (315 aa).

Residues 40-293 form the CoA carboxyltransferase C-terminal domain; that stretch reads LQDKSKTLTE…REELSSQLAM (254 aa).

It belongs to the AccA family. Acetyl-CoA carboxylase is a heterohexamer composed of biotin carboxyl carrier protein (AccB), biotin carboxylase (AccC) and two subunits each of ACCase subunit alpha (AccA) and ACCase subunit beta (AccD).

Its subcellular location is the cytoplasm. It carries out the reaction N(6)-carboxybiotinyl-L-lysyl-[protein] + acetyl-CoA = N(6)-biotinyl-L-lysyl-[protein] + malonyl-CoA. The protein operates within lipid metabolism; malonyl-CoA biosynthesis; malonyl-CoA from acetyl-CoA: step 1/1. Its function is as follows. Component of the acetyl coenzyme A carboxylase (ACC) complex. First, biotin carboxylase catalyzes the carboxylation of biotin on its carrier protein (BCCP) and then the CO(2) group is transferred by the carboxyltransferase to acetyl-CoA to form malonyl-CoA. The polypeptide is Acetyl-coenzyme A carboxylase carboxyl transferase subunit alpha (Pseudomonas syringae pv. tomato (strain ATCC BAA-871 / DC3000)).